Here is an 88-residue protein sequence, read N- to C-terminus: Large ribosomal subunit protein bL27 (88 aa).

The disordered stretch occupies residues 1–21 (MAHKKGASSSRNGRDSAAQRL).

The protein belongs to the bacterial ribosomal protein bL27 family.

The protein is Large ribosomal subunit protein bL27 of Mycobacterium marinum (strain ATCC BAA-535 / M).